A 1396-amino-acid chain; its full sequence is ATP-binding cassette transporter pdr1 (1396 aa).

A disordered region spans residues 1–22 (MSEQEKGKGDLDDPNSKNTKCP). One can recognise an ABC transporter 1 domain in the interval 73 to 320 (LHPINIIFRT…FLDLGFIPAK (248 aa)). Positions 412–622 (LQVFATAKVT…GYESIMLNEF (211 aa)) constitute an ABC transmembrane type-2 1 domain. The next 6 membrane-spanning stretches (helical) occupy residues 431-451 (YIAT…SLFY), 466-486 (VLSN…DIIF), 512-532 (LVEF…VYFL), 543-563 (FIFY…FRFI), 572-592 (IAAL…GAVM), and 680-700 (GIIL…ANFI). The ABC transporter 2 domain occupies 758–1001 (LCWRDLNFTV…LVNYFKRIHG (244 aa)). Residue 794–801 (GENKSGKS) coordinates ATP. The ABC transmembrane type-2 2 domain occupies 1071–1286 (FQIYKISMRN…FLEGMIGGVL (216 aa)). 5 helical membrane passes run 1095-1115 (VAFN…QGVG), 1166-1186 (FIIA…TLFF), 1208-1228 (FAWL…IGIA), 1245-1265 (FVFI…VGFW), and 1361-1381 (CIMI…YYII).

It belongs to the ABC transporter superfamily. ABCG family. PDR (TC 3.A.1.205) subfamily.

The protein resides in the endoplasmic reticulum membrane. This Schizosaccharomyces pombe (strain 972 / ATCC 24843) (Fission yeast) protein is ATP-binding cassette transporter pdr1 (pdr1).